The chain runs to 218 residues: Octanoyltransferase (218 aa).

Positions 32–214 (ALTPDEIWLV…HFTQLLGYND (183 aa)) constitute a BPL/LPL catalytic domain. Residues 71-78 (RGGQITYH), 143-145 (SLG), and 156-158 (GLA) each bind substrate. Catalysis depends on Cys-174, which acts as the Acyl-thioester intermediate.

Belongs to the LipB family.

It localises to the cytoplasm. It catalyses the reaction octanoyl-[ACP] + L-lysyl-[protein] = N(6)-octanoyl-L-lysyl-[protein] + holo-[ACP] + H(+). The protein operates within protein modification; protein lipoylation via endogenous pathway; protein N(6)-(lipoyl)lysine from octanoyl-[acyl-carrier-protein]: step 1/2. Functionally, catalyzes the transfer of endogenously produced octanoic acid from octanoyl-acyl-carrier-protein onto the lipoyl domains of lipoate-dependent enzymes. Lipoyl-ACP can also act as a substrate although octanoyl-ACP is likely to be the physiological substrate. This Histophilus somni (strain 129Pt) (Haemophilus somnus) protein is Octanoyltransferase.